The primary structure comprises 380 residues: Homoserine O-succinyltransferase (380 aa).

Positions 51-362 (NAVLICHALS…SKHGHDAFLL (312 aa)) constitute an AB hydrolase-1 domain. Catalysis depends on Ser157, which acts as the Nucleophile. Residue Arg227 coordinates substrate. Residues Asp324 and His357 contribute to the active site. Residue Asp358 participates in substrate binding.

Belongs to the AB hydrolase superfamily. MetX family. As to quaternary structure, homodimer.

Its subcellular location is the cytoplasm. It carries out the reaction L-homoserine + succinyl-CoA = O-succinyl-L-homoserine + CoA. Its pathway is amino-acid biosynthesis; L-methionine biosynthesis via de novo pathway; O-succinyl-L-homoserine from L-homoserine: step 1/1. Its function is as follows. Transfers a succinyl group from succinyl-CoA to L-homoserine, forming succinyl-L-homoserine. The polypeptide is Homoserine O-succinyltransferase (Cellvibrio japonicus (strain Ueda107) (Pseudomonas fluorescens subsp. cellulosa)).